We begin with the raw amino-acid sequence, 1492 residues long: DNA-directed RNA polymerase subunit beta' (1492 aa).

Residues C67, C69, C82, and C85 each contribute to the Zn(2+) site. Mg(2+)-binding residues include D499, D501, and D503. Residues C867, C943, C950, and C953 each coordinate Zn(2+).

The protein belongs to the RNA polymerase beta' chain family. In terms of assembly, the RNAP catalytic core consists of 2 alpha, 1 beta, 1 beta' and 1 omega subunit. When a sigma factor is associated with the core the holoenzyme is formed, which can initiate transcription. Mg(2+) serves as cofactor. Zn(2+) is required as a cofactor.

The enzyme catalyses RNA(n) + a ribonucleoside 5'-triphosphate = RNA(n+1) + diphosphate. Functionally, DNA-dependent RNA polymerase catalyzes the transcription of DNA into RNA using the four ribonucleoside triphosphates as substrates. The sequence is that of DNA-directed RNA polymerase subunit beta' from Chlorobium phaeobacteroides (strain DSM 266 / SMG 266 / 2430).